Reading from the N-terminus, the 491-residue chain is Glutamate--tRNA ligase (491 aa).

The short motif at 13 to 23 (PSPTGFLHIGN) is the 'HIGH' region element. 4 residues coordinate Zn(2+): C110, C112, C137, and H139. A 'KMSKS' region motif is present at residues 254–258 (KLSKR). Residue K257 coordinates ATP.

It belongs to the class-I aminoacyl-tRNA synthetase family. Glutamate--tRNA ligase type 1 subfamily. In terms of assembly, monomer. It depends on Zn(2+) as a cofactor.

It localises to the cytoplasm. It catalyses the reaction tRNA(Glu) + L-glutamate + ATP = L-glutamyl-tRNA(Glu) + AMP + diphosphate. Catalyzes the attachment of glutamate to tRNA(Glu) in a two-step reaction: glutamate is first activated by ATP to form Glu-AMP and then transferred to the acceptor end of tRNA(Glu). The sequence is that of Glutamate--tRNA ligase from Listeria welshimeri serovar 6b (strain ATCC 35897 / DSM 20650 / CCUG 15529 / CIP 8149 / NCTC 11857 / SLCC 5334 / V8).